A 641-amino-acid polypeptide reads, in one-letter code: Anthrax toxin receptor-like (641 aa).

Positions 1 to 27 (MMSHSPSMPCSALFLLLLLLLPPTFKG) are cleaved as a signal peptide. Residues 28–363 (GSLRYHGPGW…ASQGIVFKRT (336 aa)) are Extracellular-facing. The region spanning 76-247 (DLYLVLDKSG…SALEGVVDPL (172 aa)) is the VWFA domain. Ser-84, Ser-86, and Thr-150 together coordinate a divalent metal cation. The helical transmembrane segment at 364-384 (WLMFLPVLLVTLLLLCCTWKL) threads the bilayer. At 385–641 (CIKPKKLPPP…FPPISKGPKF (257 aa)) the chain is on the cytoplasmic side. The tract at residues 391–455 (LPPPPPKPEK…ARPPPAPLPA (65 aa)) is disordered. The span at 407 to 436 (PPPSSPPAPGRGPGPGPSAGPGPGPGPSPG) shows a compositional bias: pro residues.

Belongs to the ATR family.

It localises to the membrane. This is Anthrax toxin receptor-like (Antxrl) from Mus musculus (Mouse).